The chain runs to 131 residues: Small ribosomal subunit protein uS8 (131 aa).

It belongs to the universal ribosomal protein uS8 family. In terms of assembly, part of the 30S ribosomal subunit. Contacts proteins S5 and S12.

In terms of biological role, one of the primary rRNA binding proteins, it binds directly to 16S rRNA central domain where it helps coordinate assembly of the platform of the 30S subunit. The chain is Small ribosomal subunit protein uS8 from Nautilia profundicola (strain ATCC BAA-1463 / DSM 18972 / AmH).